Reading from the N-terminus, the 291-residue chain is Presqualene diphosphate synthase (291 aa).

The disordered stretch occupies residues Met-1–Ser-23.

Belongs to the phytoene/squalene synthase family. HpnD subfamily.

The catalysed reaction is 2 (2E,6E)-farnesyl diphosphate = presqualene diphosphate + diphosphate. The protein operates within secondary metabolite biosynthesis; hopanoid biosynthesis. Its function is as follows. Involved in the biosynthesis of the hopanoid precursor squalene (SQ) from farnesyl diphosphate (FPP). Catalyzes the first step, the formation of presqualene diphosphate (PSPP) from two molecules of FPP. In Zymomonas mobilis subsp. mobilis (strain ATCC 31821 / ZM4 / CP4), this protein is Presqualene diphosphate synthase.